We begin with the raw amino-acid sequence, 305 residues long: Acetyl-coenzyme A carboxylase carboxyl transferase subunit beta (305 aa).

Residues 27-296 (LWVKCSACRE…PAAKADLAAR (270 aa)) form the CoA carboxyltransferase N-terminal domain. Zn(2+) is bound by residues C31, C34, C50, and C53. The segment at 31–53 (CSACRELIYKKQLNDNLKVCPKC) adopts a C4-type zinc-finger fold.

This sequence belongs to the AccD/PCCB family. In terms of assembly, acetyl-CoA carboxylase is a heterohexamer composed of biotin carboxyl carrier protein (AccB), biotin carboxylase (AccC) and two subunits each of ACCase subunit alpha (AccA) and ACCase subunit beta (AccD). It depends on Zn(2+) as a cofactor.

It is found in the cytoplasm. The catalysed reaction is N(6)-carboxybiotinyl-L-lysyl-[protein] + acetyl-CoA = N(6)-biotinyl-L-lysyl-[protein] + malonyl-CoA. It functions in the pathway lipid metabolism; malonyl-CoA biosynthesis; malonyl-CoA from acetyl-CoA: step 1/1. Component of the acetyl coenzyme A carboxylase (ACC) complex. Biotin carboxylase (BC) catalyzes the carboxylation of biotin on its carrier protein (BCCP) and then the CO(2) group is transferred by the transcarboxylase to acetyl-CoA to form malonyl-CoA. The sequence is that of Acetyl-coenzyme A carboxylase carboxyl transferase subunit beta from Chloroflexus aggregans (strain MD-66 / DSM 9485).